The sequence spans 479 residues: Bifunctional AAC/APH (479 aa).

Residues 8–180 (ICIRTLIDDD…DCYLMEYRYD (173 aa)) form the N-acetyltransferase domain. Positions 110-153 (KGIGTRYIKLIFEFLKKERNANAVILDPHKNNPRAIRAYQKSGF) are acetyl-CoA binding site. Residue Asp374 is the Proton acceptor; for phosphotransferase activity of the active site. Asp393 serves as a coordination point for a gentamycin.

This sequence in the C-terminal section; belongs to the aminoglycoside phosphotransferase family.

The protein resides in the cytoplasm. It carries out the reaction a gentamycin + GTP = a gentamycin 2''-phosphate + GDP + H(+). Its function is as follows. Involved in resistance to gentamicin, tobramycin, and kanamycin. Tobramycin and kanamycin resistance is due to the ACC activity, specified by N-terminal region. The C-terminal region is a kinase that phosphorylates several 4,6-disubstituted aminoglycosides. In Enterococcus faecalis (strain ATCC 700802 / V583), this protein is Bifunctional AAC/APH (aacA-aphD).